We begin with the raw amino-acid sequence, 414 residues long: Gamma-glutamyl phosphate reductase (414 aa).

Belongs to the gamma-glutamyl phosphate reductase family.

Its subcellular location is the cytoplasm. The catalysed reaction is L-glutamate 5-semialdehyde + phosphate + NADP(+) = L-glutamyl 5-phosphate + NADPH + H(+). It participates in amino-acid biosynthesis; L-proline biosynthesis; L-glutamate 5-semialdehyde from L-glutamate: step 2/2. In terms of biological role, catalyzes the NADPH-dependent reduction of L-glutamate 5-phosphate into L-glutamate 5-semialdehyde and phosphate. The product spontaneously undergoes cyclization to form 1-pyrroline-5-carboxylate. This is Gamma-glutamyl phosphate reductase from Xanthomonas campestris pv. campestris (strain 8004).